Reading from the N-terminus, the 462-residue chain is Glutamate--tRNA ligase 1 (462 aa).

Positions 8–18 (PSPTGYLHIGG) match the 'HIGH' region motif. Residues 236–240 (KLSKR) carry the 'KMSKS' region motif. Lysine 239 serves as a coordination point for ATP.

Belongs to the class-I aminoacyl-tRNA synthetase family. Glutamate--tRNA ligase type 1 subfamily. Monomer.

The protein resides in the cytoplasm. The catalysed reaction is tRNA(Glu) + L-glutamate + ATP = L-glutamyl-tRNA(Glu) + AMP + diphosphate. Functionally, catalyzes the attachment of glutamate to tRNA(Glu) in a two-step reaction: glutamate is first activated by ATP to form Glu-AMP and then transferred to the acceptor end of tRNA(Glu). This Sulfurovum sp. (strain NBC37-1) protein is Glutamate--tRNA ligase 1.